The primary structure comprises 423 residues: Dihydroorotase (423 aa).

The Zn(2+) site is built by His60 and His62. Residues 62-64 and Asn94 each bind substrate; that span reads HFR. 3 residues coordinate Zn(2+): Asp151, His178, and His231. Residue Asn277 participates in substrate binding. Asp304 provides a ligand contact to Zn(2+). Asp304 is a catalytic residue. His308 lines the substrate pocket.

Belongs to the metallo-dependent hydrolases superfamily. DHOase family. Class I DHOase subfamily. It depends on Zn(2+) as a cofactor.

The catalysed reaction is (S)-dihydroorotate + H2O = N-carbamoyl-L-aspartate + H(+). It functions in the pathway pyrimidine metabolism; UMP biosynthesis via de novo pathway; (S)-dihydroorotate from bicarbonate: step 3/3. In terms of biological role, catalyzes the reversible cyclization of carbamoyl aspartate to dihydroorotate. This is Dihydroorotase from Lactococcus lactis subsp. lactis (strain IL1403) (Streptococcus lactis).